The sequence spans 406 residues: Protein translocase subunit SecD (406 aa).

A run of 6 helical transmembrane segments spans residues 8-28 (IVIL…NPIN), 240-260 (MAAM…YRVA), 262-282 (FVAD…MCAI), 289-309 (PGIA…VIIF), 334-354 (FPAI…LFFF), and 361-381 (GFAV…IFIT).

Belongs to the SecD/SecF family. SecD subfamily. Forms a complex with SecF. Part of the essential Sec protein translocation apparatus which comprises SecA, SecYEG and auxiliary proteins SecDF. Other proteins may also be involved.

It is found in the cell inner membrane. In terms of biological role, part of the Sec protein translocase complex. Interacts with the SecYEG preprotein conducting channel. SecDF uses the proton motive force (PMF) to complete protein translocation after the ATP-dependent function of SecA. The protein is Protein translocase subunit SecD of Sebaldella termitidis (strain ATCC 33386 / NCTC 11300).